Reading from the N-terminus, the 240-residue chain is PF03932 family protein CutC (240 aa).

It belongs to the CutC family.

Its subcellular location is the cytoplasm. The protein is PF03932 family protein CutC of Xanthomonas axonopodis pv. citri (strain 306).